The chain runs to 342 residues: Methionine import ATP-binding protein MetN 3 (342 aa).

The region spanning I2 to V241 is the ABC transporter domain. G38–S45 is an ATP binding site.

The protein belongs to the ABC transporter superfamily. Methionine importer (TC 3.A.1.24) family. In terms of assembly, the complex is composed of two ATP-binding proteins (MetN), two transmembrane proteins (MetI) and a solute-binding protein (MetQ).

The protein resides in the cell membrane. It carries out the reaction L-methionine(out) + ATP + H2O = L-methionine(in) + ADP + phosphate + H(+). The catalysed reaction is D-methionine(out) + ATP + H2O = D-methionine(in) + ADP + phosphate + H(+). Functionally, part of the ABC transporter complex MetNIQ involved in methionine import. Responsible for energy coupling to the transport system. In Shouchella clausii (strain KSM-K16) (Alkalihalobacillus clausii), this protein is Methionine import ATP-binding protein MetN 3.